Reading from the N-terminus, the 341-residue chain is Chorismate synthase (341 aa).

2 disordered regions span residues 45–64 (LERR…GRQE) and 109–134 (HADD…GRET). Arginine 48 is an NADP(+) binding site. FMN-binding positions include 128 to 130 (RSS), glycine 280, 295 to 299 (KPTSS), and arginine 308.

It belongs to the chorismate synthase family. Homotetramer. FMNH2 serves as cofactor.

It catalyses the reaction 5-O-(1-carboxyvinyl)-3-phosphoshikimate = chorismate + phosphate. The protein operates within metabolic intermediate biosynthesis; chorismate biosynthesis; chorismate from D-erythrose 4-phosphate and phosphoenolpyruvate: step 7/7. Functionally, catalyzes the anti-1,4-elimination of the C-3 phosphate and the C-6 proR hydrogen from 5-enolpyruvylshikimate-3-phosphate (EPSP) to yield chorismate, which is the branch point compound that serves as the starting substrate for the three terminal pathways of aromatic amino acid biosynthesis. This reaction introduces a second double bond into the aromatic ring system. The chain is Chorismate synthase from Bdellovibrio bacteriovorus (strain ATCC 15356 / DSM 50701 / NCIMB 9529 / HD100).